A 163-amino-acid chain; its full sequence is Transcription elongation factor GreA (163 aa).

Positions 11–38 (FKQLEKELDRLKKERPGVIQAIKEAREE) form a coiled coil.

It belongs to the GreA/GreB family.

Necessary for efficient RNA polymerase transcription elongation past template-encoded arresting sites. The arresting sites in DNA have the property of trapping a certain fraction of elongating RNA polymerases that pass through, resulting in locked ternary complexes. Cleavage of the nascent transcript by cleavage factors such as GreA or GreB allows the resumption of elongation from the new 3'terminus. GreA releases sequences of 2 to 3 nucleotides. The chain is Transcription elongation factor GreA from Nitratidesulfovibrio vulgaris (strain ATCC 29579 / DSM 644 / CCUG 34227 / NCIMB 8303 / VKM B-1760 / Hildenborough) (Desulfovibrio vulgaris).